Here is a 208-residue protein sequence, read N- to C-terminus: MELKVLNTAGTETGEVVILRDDIFGIEISEHAMYLDVKSILANKRQGTHKAKTRSEVRGGGKKPFRQKGTGNARQGSSRSPIHVGGGTIFGPQPHTYEQKVNKKVKLLARRSALSAKAQAGKIVVVDDFRFDAIKTKPFADILKNLGLDAKKTLLLMPEYDMVVNRSGRNIAKLEIMTADKASTYDILYSNTLLVQKSALKTIDETLG.

The disordered stretch occupies residues 45–95 (RQGTHKAKTRSEVRGGGKKPFRQKGTGNARQGSSRSPIHVGGGTIFGPQPH). Over residues 69–80 (GTGNARQGSSRS) the composition is skewed to polar residues.

The protein belongs to the universal ribosomal protein uL4 family. In terms of assembly, part of the 50S ribosomal subunit.

In terms of biological role, one of the primary rRNA binding proteins, this protein initially binds near the 5'-end of the 23S rRNA. It is important during the early stages of 50S assembly. It makes multiple contacts with different domains of the 23S rRNA in the assembled 50S subunit and ribosome. Forms part of the polypeptide exit tunnel. This Chlorobium chlorochromatii (strain CaD3) protein is Large ribosomal subunit protein uL4.